The chain runs to 144 residues: Eukaryotic translation initiation factor 1A, Y-chromosomal (144 aa).

Over residues 1–15 (MPKNKGKGGKNRRRG) the composition is skewed to basic residues. Residues 1-26 (MPKNKGKGGKNRRRGKNENESEKREL) are disordered. Basic and acidic residues predominate over residues 16-26 (KNENESEKREL). Residues 22-96 (EKRELVFKED…NKADVILKYN (75 aa)) enclose the S1-like domain. Lysine 88 is covalently cross-linked (Glycyl lysine isopeptide (Lys-Gly) (interchain with G-Cter in ubiquitin)). The segment at 114–144 (KINETDTFGPGDDDEVQFDDIGDDDEDIDDI) is disordered. Acidic residues predominate over residues 124–144 (GDDDEVQFDDIGDDDEDIDDI).

The protein belongs to the eIF-1A family. As to quaternary structure, component of the 43S pre-initiation complex (43S PIC), which is composed of the 40S ribosomal subunit, EIF1, eIF1A (EIF1AX), eIF3 complex, EIF5 and eIF2-GTP-initiator tRNA complex (eIF2 ternary complex). Interacts with EIF5; this interaction contributes to the maintenance of EIF1 within the open 43S PIC. Interacts through its C-terminal domain (CTD) with the CTD of EIF5B; from the location of the start codon by the 43S complex until the formation of the 80S complex. As to expression, ubiquitous.

Its subcellular location is the cytoplasm. In terms of biological role, component of the 43S pre-initiation complex (43S PIC), which binds to the mRNA cap-proximal region, scans mRNA 5'-untranslated region, and locates the initiation codon. This protein enhances formation of the cap-proximal complex. Together with EIF1, facilitates scanning, start codon recognition, promotion of the assembly of 48S complex at the initiation codon (43S PIC becomes 48S PIC after the start codon is reached), and dissociation of aberrant complexes. After start codon location, together with EIF5B orients the initiator methionine-tRNA in a conformation that allows 60S ribosomal subunit joining to form the 80S initiation complex. Is released after 80S initiation complex formation, just after GTP hydrolysis by EIF5B, and before release of EIF5B. Its globular part is located in the A site of the 40S ribosomal subunit. Its interaction with EIF5 during scanning contribute to the maintenance of EIF1 within the open 43S PIC. In contrast to yeast orthologs, does not bind EIF1. This is Eukaryotic translation initiation factor 1A, Y-chromosomal (EIF1AY) from Pan troglodytes (Chimpanzee).